A 274-amino-acid chain; its full sequence is MQNITQSWFVQGMIKATTDAWLKGWDERNGGNLTLRLDDADIAPYHGNFHAQPRYIPLSQPMPLLANTPFIVTGSGKFFRNVQLDPAANLGVVKVDSDGAGYHILWGLTNEAVPTSELPAHFLSHCERIKATNGKDRVIMHCHATNLIALTYVLENDTAVFTRQLWEGSTECLVVFPDGVGILPWMVPGTDEIGQATAQEMQKHSLVLWPFHGVFGSGPTLDETFGLIDTAEKSAQVLVKVYSMGGMKQTISREELIALGQRFGVTPLASALAL.

Residue Glu-117 is part of the active site. The Zn(2+) site is built by His-141, His-143, and His-212.

It belongs to the aldolase class II family. RhaD subfamily. In terms of assembly, homotetramer. The cofactor is Zn(2+).

The protein resides in the cytoplasm. The enzyme catalyses L-rhamnulose 1-phosphate = (S)-lactaldehyde + dihydroxyacetone phosphate. It functions in the pathway carbohydrate degradation; L-rhamnose degradation; glycerone phosphate from L-rhamnose: step 3/3. Its function is as follows. Catalyzes the reversible cleavage of L-rhamnulose-1-phosphate to dihydroxyacetone phosphate (DHAP) and L-lactaldehyde. This is Rhamnulose-1-phosphate aldolase from Escherichia coli O127:H6 (strain E2348/69 / EPEC).